Here is a 496-residue protein sequence, read N- to C-terminus: MNMGVDKKQNTVLYISSAIALLFVLWGVFLPENMANVVNKVFALLTTNFGWLYLLAVAIFIIFVFGIAISRYGKIKLGADDDKPEFSNFQWFAMLFGGGMGIGLVFWSVAEPIMHFNSPPFGEPGTVEAMQTSMRVVFFHWGIHAWVNFAIAGLALAYFQFRKGLPFLISSAFYPLIGDRIYGPIGKAIDILAVFATIFGIATSLGLGSSQIATGIQYIWGIPAGPLTISLVIAVITVIFTLATVSGLHKAMQSIANVKVWLSVAFMVFIFYFGGKVFILNTFTQSLGDYLQNFVGQTFWMANESWVGGWTIFYWAWWIAWAPFVGQFVARVSKGRTIREFVFAVTLLPVGFSFIWLAIYGGAAFNLDQISGGFIQNAVNADYTTALFALLQQMPLYAITGPLAILLIVTCFVGAADSATYVLAMLTSNGDMDPSKKLRSFWGIMQGAMTIVLIVVGGTAALKALQTASIASAFPFMLIMLVMCYSILKALRSDHP.

12 helical membrane passes run 11-31 (TVLY…VFLP), 49-69 (FGWL…GIAI), 89-109 (FQWF…FWSV), 136-156 (VVFF…GLAL), 188-208 (AIDI…LGLG), 219-239 (IWGI…ITVI), 260-280 (VWLS…VFIL), 306-326 (WVGG…PFVG), 341-361 (FVFA…AIYG), 396-416 (LYAI…VGAA), 441-461 (FWGI…GTAA), and 468-488 (ASIA…YSIL).

It belongs to the BCCT transporter (TC 2.A.15) family.

It is found in the cell membrane. Probably acts in the uptake of glycine betaine. May function in the pathway that allows anaerobic methylotrophic growth of D.hafniense using glycine betaine. This chain is Probable glycine betaine transporter, found in Desulfitobacterium hafniense (strain Y51).